The primary structure comprises 360 residues: Phosphoserine aminotransferase (360 aa).

R42 is a binding site for L-glutamate. Pyridoxal 5'-phosphate is bound by residues 76 to 77 (AR), W102, T153, D172, and Q195. Position 196 is an N6-(pyridoxal phosphate)lysine (K196). 237-238 (NT) contributes to the pyridoxal 5'-phosphate binding site.

The protein belongs to the class-V pyridoxal-phosphate-dependent aminotransferase family. SerC subfamily. As to quaternary structure, homodimer. It depends on pyridoxal 5'-phosphate as a cofactor.

The protein resides in the cytoplasm. The catalysed reaction is O-phospho-L-serine + 2-oxoglutarate = 3-phosphooxypyruvate + L-glutamate. It catalyses the reaction 4-(phosphooxy)-L-threonine + 2-oxoglutarate = (R)-3-hydroxy-2-oxo-4-phosphooxybutanoate + L-glutamate. It participates in amino-acid biosynthesis; L-serine biosynthesis; L-serine from 3-phospho-D-glycerate: step 2/3. The protein operates within cofactor biosynthesis; pyridoxine 5'-phosphate biosynthesis; pyridoxine 5'-phosphate from D-erythrose 4-phosphate: step 3/5. Its function is as follows. Catalyzes the reversible conversion of 3-phosphohydroxypyruvate to phosphoserine and of 3-hydroxy-2-oxo-4-phosphonooxybutanoate to phosphohydroxythreonine. This chain is Phosphoserine aminotransferase, found in Photobacterium profundum (strain SS9).